The sequence spans 820 residues: Probable protease Ga0182885_104520 (820 aa).

This sequence belongs to the peptidase C25 family.

Functionally, probably a dedicated protease for substrate gasdermin bGSDM; cleaves the bGSDM precursor, releasing the pore-forming moiety, which integrates into the membrane and triggers cell death. Involved in defense against bacteriophages. Expression of bacterial gasdermin (bGSDM) and this neighboring protease is toxic in E.coli. In Desulfuromonadales bacterium, this protein is Probable protease Ga0182885_104520.